The sequence spans 514 residues: Glutathione-binding protein GsiB (514 aa).

An N-terminal signal peptide occupies residues 1–26 (MARAVHRSGLVALGIATALMASCAFA).

It belongs to the bacterial solute-binding protein 5 family. As to quaternary structure, the complex is composed of two ATP-binding proteins (GsiA), two transmembrane proteins (GsiC and GsiD) and a solute-binding protein (GsiB).

The protein localises to the periplasm. Its function is as follows. Part of the ABC transporter complex GsiABCD involved in glutathione import. Binds glutathione. This is Glutathione-binding protein GsiB from Shigella flexneri serotype 5b (strain 8401).